Here is a 289-residue protein sequence, read N- to C-terminus: 4-hydroxy-tetrahydrodipicolinate synthase (289 aa).

T43 serves as a coordination point for pyruvate. The Proton donor/acceptor role is filled by Y131. The active-site Schiff-base intermediate with substrate is K160. I200 provides a ligand contact to pyruvate.

The protein belongs to the DapA family. In terms of assembly, homotetramer; dimer of dimers.

The protein localises to the cytoplasm. It carries out the reaction L-aspartate 4-semialdehyde + pyruvate = (2S,4S)-4-hydroxy-2,3,4,5-tetrahydrodipicolinate + H2O + H(+). The protein operates within amino-acid biosynthesis; L-lysine biosynthesis via DAP pathway; (S)-tetrahydrodipicolinate from L-aspartate: step 3/4. Catalyzes the condensation of (S)-aspartate-beta-semialdehyde [(S)-ASA] and pyruvate to 4-hydroxy-tetrahydrodipicolinate (HTPA). The chain is 4-hydroxy-tetrahydrodipicolinate synthase from Methanococcus vannielii (strain ATCC 35089 / DSM 1224 / JCM 13029 / OCM 148 / SB).